The following is a 233-amino-acid chain: Gamma-interferon-responsive lysosomal thiol protein (233 aa).

Positions 1–26 (MVSSSLTKLVFFGCLLLLTFTDNLVA) are cleaved as a signal peptide. Cysteines 42 and 45 form a disulfide. N-linked (GlcNAc...) asparagine glycosylation is found at asparagine 80 and asparagine 207. Positions 200 to 233 (TTLPKVCNSSASMSKSPERKWKLQVSYANKATNY) are cleaved as a propeptide — removed in mature form.

Belongs to the GILT family. In terms of assembly, dimer; disulfide-linked. In terms of tissue distribution, expressed in the outer integument of seed coat.

The protein localises to the secreted. It localises to the lysosome. Lysosomal thiol reductase that can reduce protein disulfide bonds. May facilitate the complete unfolding of proteins destined for lysosomal degradation. This Arabidopsis thaliana (Mouse-ear cress) protein is Gamma-interferon-responsive lysosomal thiol protein.